The following is a 156-amino-acid chain: Endogenous retrovirus group K member 19 Pro protein (156 aa).

The region spanning 21–96 is the Peptidase A2 domain; sequence FEGLVDTGAD…IPLNLWGRDL (76 aa). The active site involves Asp-26. Residues 111-156 enclose the G-patch domain; it reads YSPTSQKIMTKMGYILGKGLGKNEDGIKIPVEAKINQKREGIGYPF.

Belongs to the peptidase A2 family. HERV class-II K(HML-2) subfamily. In terms of assembly, active as a homodimer. Autoproteolytically processed at the N-terminus. Expected C-terminal autoprocessing not detected. The sequence shown is that of the processed Pro protein.

It catalyses the reaction Processing at the authentic HIV-1 PR recognition site and release of the mature p17 matrix and the p24 capsid protein, as a result of the cleavage of the -SQNY-|-PIVQ- cleavage site.. Its function is as follows. Retroviral proteases have roles in the processing of the primary translation products and the maturation of the viral particle. Endogenous Pro proteins may have kept, lost or modified their original function during evolution. The polypeptide is Endogenous retrovirus group K member 19 Pro protein (ERVK-19) (Homo sapiens (Human)).